Here is a 582-residue protein sequence, read N- to C-terminus: Aspartate--tRNA ligase (582 aa).

Glutamate 174 serves as a coordination point for L-aspartate. Residues 198-201 (QITK) are aspartate. Arginine 220 serves as a coordination point for L-aspartate. Residues 220 to 222 (RDE) and glutamine 229 each bind ATP. Position 443 (histidine 443) interacts with L-aspartate. Glutamate 477 is an ATP binding site. Residue arginine 484 coordinates L-aspartate. 529-532 (GLDR) is an ATP binding site.

It belongs to the class-II aminoacyl-tRNA synthetase family. Type 1 subfamily. Homodimer.

The protein resides in the cytoplasm. The catalysed reaction is tRNA(Asp) + L-aspartate + ATP = L-aspartyl-tRNA(Asp) + AMP + diphosphate. In terms of biological role, catalyzes the attachment of L-aspartate to tRNA(Asp) in a two-step reaction: L-aspartate is first activated by ATP to form Asp-AMP and then transferred to the acceptor end of tRNA(Asp). In Streptococcus equi subsp. zooepidemicus (strain MGCS10565), this protein is Aspartate--tRNA ligase.